A 1302-amino-acid polypeptide reads, in one-letter code: Regulator of telomere elongation helicase 1 (1302 aa).

The Helicase ATP-binding domain maps to 7-297 (NGVTVDFPFQ…TKTAQQGEPH (291 aa)). Residue 42 to 49 (SHTGTGKT) participates in ATP binding. [4Fe-4S] cluster contacts are provided by C146, C164, C173, and C208. Positions 152-168 (KKQESNHIQIHLCRKKV) match the Nuclear localization signal motif. The DEAH box motif lies at 251–254 (DEAH). Over residues 758-767 (PAPAPRATAP) the composition is skewed to low complexity. The disordered stretch occupies residues 758–819 (PAPAPRATAP…AAGDPESSLC (62 aa)). Residues 770–780 (REGEDAVREVK) show a composition bias toward basic and acidic residues. The Nuclear localization signal motif lies at 873–879 (PRGGRKK). Disordered regions lie at residues 981–1006 (RPEH…APDP), 1019–1058 (DPRE…GKQG), 1134–1153 (CTDL…PQEE), and 1160–1234 (VLTH…QAAG). The segment covering 1178 to 1187 (KTQSKISSLL) has biased composition (polar residues). Residues 1180 to 1187 (QSKISSLL) carry the PIP-box motif.

The protein belongs to the helicase family. RAD3/XPD subfamily. Interacts with TERF1. Interacts (via PIP-box) with PCNA; the interaction is direct and essential for suppressing telomere fragility. Interacts with MMS19; the interaction mediates the association of RTEL1 with the cytosolic iron-sulfur protein assembly (CIA) complex.

It localises to the nucleus. It carries out the reaction ATP + H2O = ADP + phosphate + H(+). Functionally, a probable ATP-dependent DNA helicase implicated in telomere-length regulation, DNA repair and the maintenance of genomic stability. Acts as an anti-recombinase to counteract toxic recombination and limit crossover during meiosis. Regulates meiotic recombination and crossover homeostasis by physically dissociating strand invasion events and thereby promotes noncrossover repair by meiotic synthesis dependent strand annealing (SDSA) as well as disassembly of D loop recombination intermediates. Also disassembles T loops and prevents telomere fragility by counteracting telomeric G4-DNA structures, which together ensure the dynamics and stability of the telomere. The polypeptide is Regulator of telomere elongation helicase 1 (Pongo abelii (Sumatran orangutan)).